A 150-amino-acid polypeptide reads, in one-letter code: Large-conductance mechanosensitive channel (150 aa).

Helical transmembrane passes span valine 14–phenylalanine 34 and glycine 81–valine 101.

The protein belongs to the MscL family. In terms of assembly, homopentamer.

Its subcellular location is the cell membrane. Channel that opens in response to stretch forces in the membrane lipid bilayer. May participate in the regulation of osmotic pressure changes within the cell. This chain is Large-conductance mechanosensitive channel, found in Syntrophomonas wolfei subsp. wolfei (strain DSM 2245B / Goettingen).